We begin with the raw amino-acid sequence, 87 residues long: Phosphoribosyl-ATP pyrophosphatase (87 aa).

The protein belongs to the PRA-PH family.

The protein localises to the cytoplasm. It catalyses the reaction 1-(5-phospho-beta-D-ribosyl)-ATP + H2O = 1-(5-phospho-beta-D-ribosyl)-5'-AMP + diphosphate + H(+). It functions in the pathway amino-acid biosynthesis; L-histidine biosynthesis; L-histidine from 5-phospho-alpha-D-ribose 1-diphosphate: step 2/9. In Thermobifida fusca (strain YX), this protein is Phosphoribosyl-ATP pyrophosphatase.